A 365-amino-acid polypeptide reads, in one-letter code: Forkhead box protein H1 (365 aa).

A disordered region spans residues 1 to 29 (MGPCSGSRLGPPEAESPSQPPKRRKKRYL). A DNA-binding region (fork-head) is located at residues 32–128 (DKPPYTYLAM…ALRLQNTALC (97 aa)). Residues 151–215 (GRPYRPPSPP…TPPLPSSERP (65 aa)) are disordered. Residues 154–164 (YRPPSPPPPPS) are compositionally biased toward pro residues. Residues 273 to 354 (LWGQLPTSYL…VSHPRDLAAP (82 aa)) are SMAD-interaction domain (SID). The Fast/FoxH1 motif 1 (FM1) signature appears at 277–281 (LPTSY). A Fast/FoxH1 motif 2 (FM2) motif is present at residues 287-293 (PNVVMPL). The SMAD interaction motif (SIM) motif lies at 327–348 (LDALFQGVPPNKSIYDVWVSHP).

Interacts with the MH2 domains of SMAD2 and SMAD3. Ubiquitous.

It is found in the nucleus. Its function is as follows. Transcriptional activator. Recognizes and binds to the DNA sequence 5'-TGT[GT][GT]ATT-3'. Required for induction of the goosecoid (GSC) promoter by TGF-beta or activin signaling. Forms a transcriptionally active complex containing FOXH1/SMAD2/SMAD4 on a site on the GSC promoter called TARE (TGF-beta/activin response element). This Homo sapiens (Human) protein is Forkhead box protein H1 (FOXH1).